Reading from the N-terminus, the 354-residue chain is UDP-N-acetylglucosamine--N-acetylmuramyl-(pentapeptide) pyrophosphoryl-undecaprenol N-acetylglucosamine transferase (354 aa).

UDP-N-acetyl-alpha-D-glucosamine is bound by residues 11–13 (TGG), N117, R160, S186, and Q288.

Belongs to the glycosyltransferase 28 family. MurG subfamily.

The protein resides in the cell inner membrane. The enzyme catalyses di-trans,octa-cis-undecaprenyl diphospho-N-acetyl-alpha-D-muramoyl-L-alanyl-D-glutamyl-meso-2,6-diaminopimeloyl-D-alanyl-D-alanine + UDP-N-acetyl-alpha-D-glucosamine = di-trans,octa-cis-undecaprenyl diphospho-[N-acetyl-alpha-D-glucosaminyl-(1-&gt;4)]-N-acetyl-alpha-D-muramoyl-L-alanyl-D-glutamyl-meso-2,6-diaminopimeloyl-D-alanyl-D-alanine + UDP + H(+). The protein operates within cell wall biogenesis; peptidoglycan biosynthesis. Its function is as follows. Cell wall formation. Catalyzes the transfer of a GlcNAc subunit on undecaprenyl-pyrophosphoryl-MurNAc-pentapeptide (lipid intermediate I) to form undecaprenyl-pyrophosphoryl-MurNAc-(pentapeptide)GlcNAc (lipid intermediate II). The polypeptide is UDP-N-acetylglucosamine--N-acetylmuramyl-(pentapeptide) pyrophosphoryl-undecaprenol N-acetylglucosamine transferase (Rickettsia canadensis (strain McKiel)).